The primary structure comprises 29 residues: Cytochrome b6-f complex subunit 8 (29 aa).

The chain crosses the membrane as a helical span at residues 3-23 (IVSLAWASLMVVFTFSLSLVV).

It belongs to the PetN family. The 4 large subunits of the cytochrome b6-f complex are cytochrome b6, subunit IV (17 kDa polypeptide, PetD), cytochrome f and the Rieske protein, while the 4 small subunits are PetG, PetL, PetM and PetN. The complex functions as a dimer.

Its subcellular location is the plastid. The protein resides in the chloroplast thylakoid membrane. In terms of biological role, component of the cytochrome b6-f complex, which mediates electron transfer between photosystem II (PSII) and photosystem I (PSI), cyclic electron flow around PSI, and state transitions. The polypeptide is Cytochrome b6-f complex subunit 8 (Coffea arabica (Arabian coffee)).